Here is a 175-residue protein sequence, read N- to C-terminus: Ribosome maturation factor RimM (175 aa).

A PRC barrel domain is found at 98-175 (EGEYYWHQLE…EMRVDWDADF (78 aa)).

The protein belongs to the RimM family. As to quaternary structure, binds ribosomal protein uS19.

The protein localises to the cytoplasm. Its function is as follows. An accessory protein needed during the final step in the assembly of 30S ribosomal subunit, possibly for assembly of the head region. Essential for efficient processing of 16S rRNA. May be needed both before and after RbfA during the maturation of 16S rRNA. It has affinity for free ribosomal 30S subunits but not for 70S ribosomes. In Pseudomonas aeruginosa (strain ATCC 15692 / DSM 22644 / CIP 104116 / JCM 14847 / LMG 12228 / 1C / PRS 101 / PAO1), this protein is Ribosome maturation factor RimM.